The chain runs to 553 residues: Solute carrier family 2, facilitated glucose transporter member 10 (553 aa).

Topologically, residues Met-1–Ser-15 are cytoplasmic. Residues Leu-16–Leu-36 form a helical membrane-spanning segment. Over Lys-37–Glu-48 the chain is Extracellular. The helical transmembrane segment at Ala-49 to Ile-69 threads the bilayer. Over Asp-70–Asn-82 the chain is Cytoplasmic. A helical transmembrane segment spans residues Leu-83–Val-103. The Extracellular portion of the chain corresponds to Gly-104–Arg-105. The helical transmembrane segment at Val-106–Ile-126 threads the bilayer. Residues Val-127–Arg-132 lie on the Cytoplasmic side of the membrane. The chain crosses the membrane as a helical span at residues Gly-133–Met-153. The Extracellular portion of the chain corresponds to Asn-154–Lys-165. Residues Tyr-166 to Pro-186 traverse the membrane as a helical segment. Residues Ser-187–Thr-240 are Cytoplasmic-facing. A helical transmembrane segment spans residues Leu-241–Tyr-261. D-glucose is bound at residue Gln-250 to Gln-251. The Extracellular portion of the chain corresponds to Ala-262 to Ala-277. Residue Asn-274 is glycosylated (N-linked (GlcNAc...) asparagine). A helical membrane pass occupies residues Val-278 to Phe-298. The Cytoplasmic segment spans residues Ala-299–Arg-305. Residues Ile-306–Ser-326 traverse the membrane as a helical segment. Residues Phe-327–Ala-413 lie on the Extracellular side of the membrane. N-linked (GlcNAc...) asparagine glycosylation is found at Asn-344, Asn-351, and Asn-400. A helical membrane pass occupies residues Ile-414–Phe-434. The Cytoplasmic portion of the chain corresponds to Gly-435–Asn-462. Position 439 (Trp-439) interacts with D-glucose. The helical transmembrane segment at Trp-463–Leu-482 threads the bilayer. Residue Gly-483 is a topological domain, extracellular. The chain crosses the membrane as a helical span at residues Trp-484–Ile-504. Residues Pro-505–Thr-553 are Cytoplasmic-facing. Residues Lys-522–Thr-553 are disordered.

It belongs to the major facilitator superfamily. Sugar transporter (TC 2.A.1.1) family. Glucose transporter subfamily.

The protein localises to the endomembrane system. Its subcellular location is the cytoplasm. The protein resides in the perinuclear region. The enzyme catalyses D-glucose(out) = D-glucose(in). Its function is as follows. Facilitative glucose transporter required for the development of the cardiovascular system. This chain is Solute carrier family 2, facilitated glucose transporter member 10, found in Xenopus laevis (African clawed frog).